Consider the following 262-residue polypeptide: Flap endonuclease Xni (262 aa).

Asp105 provides a ligand contact to Mg(2+). One can recognise a 5'-3' exonuclease domain in the interval 164 to 251 (SQFLDLMALA…NINLKDFRAN (88 aa)). 5 residues coordinate K(+): Leu172, Ala173, Pro181, Ile183, and Ile186. The interval 185 to 190 (GIGPKS) is interaction with DNA.

Belongs to the Xni family. Mg(2+) serves as cofactor. It depends on K(+) as a cofactor.

In terms of biological role, has flap endonuclease activity. During DNA replication, flap endonucleases cleave the 5'-overhanging flap structure that is generated by displacement synthesis when DNA polymerase encounters the 5'-end of a downstream Okazaki fragment. This Shewanella putrefaciens (strain CN-32 / ATCC BAA-453) protein is Flap endonuclease Xni.